The primary structure comprises 450 residues: Tubulin alpha-5 chain (450 aa).

Gln-11, Glu-71, Gly-144, Thr-145, Thr-179, Asn-206, and Asn-228 together coordinate GTP. Glu-71 lines the Mg(2+) pocket. Residue Glu-254 is part of the active site.

It belongs to the tubulin family. Dimer of alpha and beta chains. A typical microtubule is a hollow water-filled tube with an outer diameter of 25 nm and an inner diameter of 15 nM. Alpha-beta heterodimers associate head-to-tail to form protofilaments running lengthwise along the microtubule wall with the beta-tubulin subunit facing the microtubule plus end conferring a structural polarity. Microtubules usually have 13 protofilaments but different protofilament numbers can be found in some organisms and specialized cells. Mg(2+) is required as a cofactor. Undergoes a tyrosination/detyrosination cycle, the cyclic removal and re-addition of a C-terminal tyrosine residue by the enzymes tubulin tyrosine carboxypeptidase (TTCP) and tubulin tyrosine ligase (TTL), respectively.

It localises to the cytoplasm. It is found in the cytoskeleton. It catalyses the reaction GTP + H2O = GDP + phosphate + H(+). Tubulin is the major constituent of microtubules, a cylinder consisting of laterally associated linear protofilaments composed of alpha- and beta-tubulin heterodimers. Microtubules grow by the addition of GTP-tubulin dimers to the microtubule end, where a stabilizing cap forms. Below the cap, tubulin dimers are in GDP-bound state, owing to GTPase activity of alpha-tubulin. The sequence is that of Tubulin alpha-5 chain (TUBA5) from Zea mays (Maize).